The chain runs to 286 residues: Aldo-keto reductase MAP_4149 (286 aa).

Residue tyrosine 61 is the Proton donor of the active site. NADPH is bound by residues leucine 201, valine 203, valine 239, arginine 241, serine 242, arginine 247, and asparagine 251.

This sequence belongs to the aldo/keto reductase family.

The protein is Aldo-keto reductase MAP_4149 of Mycolicibacterium paratuberculosis (strain ATCC BAA-968 / K-10) (Mycobacterium paratuberculosis).